Consider the following 322-residue polypeptide: Mas-related G-protein coupled receptor member X1 (322 aa).

The Extracellular portion of the chain corresponds to 1-30; sequence MDPTISSHDTESTPLNETGHPNCTPILTLS. Asn-16 carries N-linked (GlcNAc...) asparagine glycosylation. Residues 31-51 form a helical membrane-spanning segment; the sequence is FLVLITTLVGLAGNTIVLWLL. Over 52–59 the chain is Cytoplasmic; the sequence is GFRMRRKA. The helical transmembrane segment at 60-80 threads the bilayer; sequence ISVYILNLALADSFFLCCHFI. The Extracellular segment spans residues 81–100; the sequence is DSLLRIIDFYGLYAHKLSKD. The helical transmembrane segment at 101-121 threads the bilayer; that stretch reads ILGNAAIIPYISGLSILSAIS. Residues 122–142 are Cytoplasmic-facing; that stretch reads TERCLCVLWPIWYHCHRPRNM. The helical transmembrane segment at 143 to 163 threads the bilayer; it reads SAIICALIWVLSFLMGILDWF. At 164 to 179 the chain is on the extracellular side; sequence SGFLGETHHHLWKNVD. A helical membrane pass occupies residues 180–200; that stretch reads FIITAFLIFLFMLLSGSSLAL. Over 201–223 the chain is Cytoplasmic; the sequence is LLRILCGPRRKPLSRLYVTIALT. Residues 224-244 form a helical membrane-spanning segment; that stretch reads VMVYLICGLPLGLYLFLLYWF. Residues 245 to 257 lie on the Extracellular side of the membrane; sequence GVHLHYPFCHIYQ. The helical transmembrane segment at 258–278 threads the bilayer; sequence VTAVLSCVNSSANPIIYFLVG. At 279 to 322 the chain is on the cytoplasmic side; sequence SFRQHRKHRSLKRVLKRALEDTPEEDEYTDSHLHKTTEISESRY.

This sequence belongs to the G-protein coupled receptor 1 family. Mas subfamily. In terms of tissue distribution, expressed in a subset of IB4-positive small diameter nociceptive dorsal root neurons.

It localises to the cell membrane. Orphan receptor activated by neuropeptides terminating in Arg-Phe or Arg-Phe-amide. Mediates its action by association with G proteins that activate a phosphatidylinositol-calcium second messenger system. Its effect is mediated by G(q) and G(11) proteins. May regulate the function of nociceptive neurons by modulation of pain perception. This is Mas-related G-protein coupled receptor member X1 from Mus musculus (Mouse).